A 204-amino-acid polypeptide reads, in one-letter code: Holliday junction branch migration complex subunit RuvA (204 aa).

The tract at residues 1–64 (MIGKLKGTLE…EEAIRLFGFA (64 aa)) is domain I. The interval 65 to 143 (TRAEQEWFCM…PFEQAVKTVS (79 aa)) is domain II. Residues 144-154 (VPQREITHQPA) are flexible linker. Positions 154 to 204 (AHDALSALMKLGFEREQAARALALAMNALEGEAVSSALLIRHSLKLLSSPT) are domain III.

Belongs to the RuvA family. Homotetramer. Forms an RuvA(8)-RuvB(12)-Holliday junction (HJ) complex. HJ DNA is sandwiched between 2 RuvA tetramers; dsDNA enters through RuvA and exits via RuvB. An RuvB hexamer assembles on each DNA strand where it exits the tetramer. Each RuvB hexamer is contacted by two RuvA subunits (via domain III) on 2 adjacent RuvB subunits; this complex drives branch migration. In the full resolvosome a probable DNA-RuvA(4)-RuvB(12)-RuvC(2) complex forms which resolves the HJ.

It is found in the cytoplasm. Its function is as follows. The RuvA-RuvB-RuvC complex processes Holliday junction (HJ) DNA during genetic recombination and DNA repair, while the RuvA-RuvB complex plays an important role in the rescue of blocked DNA replication forks via replication fork reversal (RFR). RuvA specifically binds to HJ cruciform DNA, conferring on it an open structure. The RuvB hexamer acts as an ATP-dependent pump, pulling dsDNA into and through the RuvAB complex. HJ branch migration allows RuvC to scan DNA until it finds its consensus sequence, where it cleaves and resolves the cruciform DNA. In Bartonella tribocorum (strain CIP 105476 / IBS 506), this protein is Holliday junction branch migration complex subunit RuvA.